A 740-amino-acid polypeptide reads, in one-letter code: Ribosome-releasing factor 2, mitochondrial (740 aa).

A mitochondrion-targeting transit peptide spans 1-29 (MLKYAWQSGPKQSNRWLWHLSNQIWKRSY). Residues 31–310 (SKIRNIGILA…AVNAYLPAPE (280 aa)) enclose the tr-type G domain. GTP contacts are provided by residues 40 to 47 (AHIDAGKT), 104 to 108 (DTPGH), and 158 to 161 (NKMD).

This sequence belongs to the TRAFAC class translation factor GTPase superfamily. Classic translation factor GTPase family. EF-G/EF-2 subfamily.

It localises to the mitochondrion. Its function is as follows. Mitochondrial GTPase that mediates the disassembly of ribosomes from messenger RNA at the termination of mitochondrial protein biosynthesis. Not involved in the GTP-dependent ribosomal translocation step during translation elongation. The protein is Ribosome-releasing factor 2, mitochondrial of Drosophila melanogaster (Fruit fly).